The chain runs to 211 residues: Thiamine-phosphate synthase (211 aa).

Residues glutamine 37–lysine 41 and asparagine 69 each bind 4-amino-2-methyl-5-(diphosphooxymethyl)pyrimidine. Mg(2+) contacts are provided by aspartate 70 and aspartate 89. Serine 108 provides a ligand contact to 4-amino-2-methyl-5-(diphosphooxymethyl)pyrimidine. Residue threonine 134–threonine 136 participates in 2-[(2R,5Z)-2-carboxy-4-methylthiazol-5(2H)-ylidene]ethyl phosphate binding. Residue lysine 137 participates in 4-amino-2-methyl-5-(diphosphooxymethyl)pyrimidine binding. 2-[(2R,5Z)-2-carboxy-4-methylthiazol-5(2H)-ylidene]ethyl phosphate contacts are provided by residues glycine 166 and valine 186–serine 187.

Belongs to the thiamine-phosphate synthase family. The cofactor is Mg(2+).

It catalyses the reaction 2-[(2R,5Z)-2-carboxy-4-methylthiazol-5(2H)-ylidene]ethyl phosphate + 4-amino-2-methyl-5-(diphosphooxymethyl)pyrimidine + 2 H(+) = thiamine phosphate + CO2 + diphosphate. The catalysed reaction is 2-(2-carboxy-4-methylthiazol-5-yl)ethyl phosphate + 4-amino-2-methyl-5-(diphosphooxymethyl)pyrimidine + 2 H(+) = thiamine phosphate + CO2 + diphosphate. It carries out the reaction 4-methyl-5-(2-phosphooxyethyl)-thiazole + 4-amino-2-methyl-5-(diphosphooxymethyl)pyrimidine + H(+) = thiamine phosphate + diphosphate. It participates in cofactor biosynthesis; thiamine diphosphate biosynthesis; thiamine phosphate from 4-amino-2-methyl-5-diphosphomethylpyrimidine and 4-methyl-5-(2-phosphoethyl)-thiazole: step 1/1. Its function is as follows. Condenses 4-methyl-5-(beta-hydroxyethyl)thiazole monophosphate (THZ-P) and 2-methyl-4-amino-5-hydroxymethyl pyrimidine pyrophosphate (HMP-PP) to form thiamine monophosphate (TMP). This is Thiamine-phosphate synthase from Salmonella paratyphi A (strain ATCC 9150 / SARB42).